A 152-amino-acid polypeptide reads, in one-letter code: Protein NrdI (152 aa).

Belongs to the NrdI family.

Its function is as follows. Probably involved in ribonucleotide reductase function. This chain is Protein NrdI, found in Mycolicibacterium vanbaalenii (strain DSM 7251 / JCM 13017 / BCRC 16820 / KCTC 9966 / NRRL B-24157 / PYR-1) (Mycobacterium vanbaalenii).